We begin with the raw amino-acid sequence, 288 residues long: Putative aryl-alcohol dehydrogenase AAD10 (288 aa).

Belongs to the aldo/keto reductase family. Aldo/keto reductase 2 subfamily.

This is Putative aryl-alcohol dehydrogenase AAD10 (AAD10) from Saccharomyces cerevisiae (strain ATCC 204508 / S288c) (Baker's yeast).